The primary structure comprises 272 residues: Proteasome subunit beta type-5 (272 aa).

A propeptide spans 1 to 55 (MKLDTSGLESTAPIFRRSDFVFDGLQMTPSFDLPNPTDFDGFQKEAVQMVKPAKG) (removed in mature form). T56 serves as the catalytic Nucleophile.

The protein belongs to the peptidase T1B family. The 26S proteasome consists of a 20S proteasome core and two 19S regulatory subunits. The 20S proteasome core is composed of 28 subunits that are arranged in four stacked rings, resulting in a barrel-shaped structure. The two end rings are each formed by seven alpha subunits, and the two central rings are each formed by seven beta subunits. The catalytic chamber with the active sites is on the inside of the barrel.

Its subcellular location is the cytoplasm. It is found in the nucleus. The catalysed reaction is Cleavage of peptide bonds with very broad specificity.. Functionally, the proteasome is a multicatalytic proteinase complex which is characterized by its ability to cleave peptides with Arg, Phe, Tyr, Leu, and Glu adjacent to the leaving group at neutral or slightly basic pH. The proteasome has an ATP-dependent proteolytic activity. The sequence is that of Proteasome subunit beta type-5 from Spinacia oleracea (Spinach).